Consider the following 1075-residue polypeptide: MLRNGNEGMSTIPGFSQIQFEGFCRFINQGLAEELEKFPTIKDPDHEIAFQLFAKGYQLLEPSIKERNAVYESLTYSSELYVSARLIFGFDVQKETISIGNIPIMNSLGTFIINGIYRIVINQILLSPGIYYRSELDHKGISIYTGTIISDWGGRSELAIDKKERIWARVSRKQKISILVLSSAMGSNLREILDNVSYPEIFLSFPNAKEKKRIESKEKAILEFYQQFACVGGDLVFSESLCEELQKKFFQQKCELGRVGRRNMNRRLNLDIPQNNTFLLPRDVLAATDHLIGMKFGTGILDDDDMNHLKNKRIRSVADLLQDQFGLALGRLQHAVQKTIRRVFIRQSKPTPQTLVTPTSTSILLITTYETFFGTYPLAQVFDQTNPLTQTVHGRKVSCLGPGGLTGRTASFRSRDIHPSHYGRICPIDTSEGINVGLTGSLAIHARIDHWWGSIESPFYEISEKAKEKKERQVVYLSPNRDEYYMIAAGNSLSLNQGIQEEQVVPARYRQEFLTIAWEQIHVRSIFPFQYFSIGGSLIPFIEHNDANRALMSSNMQRQAVPLSRSEKCIVGTGLERQTALDSRVSVIAQREGKIISSDSHKILLSSSGKTISIPLVAHRRSNKNTCMHQKPRVPRGKSIKKGQILAEGAATVGGELALGKNVLVAYMPWEGYNFEDAVLISERLVYEDIYTSFHIRKYEIQTDTTSQGSAEKITKQIPHLEEHLLRNLDRNGVVRLGSWVETGDILVGKLTPQIASESSYIAEAGLLRAIFGLEVSTSKETSLKLPIGGRGRVIDVKWIQRDPFDIMVRVYILQKREIKVGDKVAGRHGNKGIISKILPRQDMPYLQDGAPVDMVFNPLGVPSRMNVGQIFESSLGLAGDLLKKHYRIAPFDERYEQEASRKLVFSELYEASKQTKNPWVFEPEYPGKSRIFDGRTGDPFEQPVLIGKSYILKLIHQVDEKIHGRSTGPYSLVTQQPVRGRAKQGGQRIGEMEVWALEGFGVAHILQEILTYKSDHLIARQEILNATIWGKRMPNHEDPPESFRVLVRELRSLALELNHFLVSEKNFQVNREDV.

This sequence belongs to the RNA polymerase beta chain family. In terms of assembly, in plastids the minimal PEP RNA polymerase catalytic core is composed of four subunits: alpha, beta, beta', and beta''. When a (nuclear-encoded) sigma factor is associated with the core the holoenzyme is formed, which can initiate transcription.

It localises to the plastid. The protein localises to the chloroplast. The enzyme catalyses RNA(n) + a ribonucleoside 5'-triphosphate = RNA(n+1) + diphosphate. Its function is as follows. DNA-dependent RNA polymerase catalyzes the transcription of DNA into RNA using the four ribonucleoside triphosphates as substrates. The polypeptide is DNA-directed RNA polymerase subunit beta (Zea mays (Maize)).